A 588-amino-acid chain; its full sequence is Hyaluronan synthase 1 (588 aa).

At 1–28 (MKEKAAETMEIPEGIPKDLEPKHPTLWR) the chain is on the cytoplasmic side. Residues 29 to 49 (IIYYSFGVVLLATITAAYVAE) traverse the membrane as a helical segment. Residues 50–61 (FQVLKHEAILFS) lie on the Extracellular side of the membrane. A helical transmembrane segment spans residues 62–82 (LGLYGLAMLLHLMMQSLFAFL). Residues 83–411 (EIRRVNKSEL…IWMTYESVVS (329 aa)) are Cytoplasmic-facing. Residues 412-432 (FIFPFFITATVIRLIYAGTIW) form a helical membrane-spanning segment. Position 433 (Asn-433) is a topological domain, extracellular. A helical membrane pass occupies residues 434-454 (VVWLLLCIQIMSLFKSIYACW). The Cytoplasmic segment spans residues 455–456 (LR). The chain crosses the membrane as a helical span at residues 457-477 (GNFIMLLMSLYSMLYMTGLLP). Topologically, residues 478 to 505 (SKYFALLTLNKTGWGTSGRKKIVGNYMP) are extracellular. A helical transmembrane segment spans residues 506 to 526 (ILPLSIWAAVLCGGVGYSIYM). At 527–543 (DCQNDWSTPEKQKEMYH) the chain is on the cytoplasmic side. The chain crosses the membrane as a helical span at residues 544–564 (LLYGCVGYVMYWVIMAVMYWV). Residues 565 to 588 (WVKRCCRKRSQTVTLVHDIPDMCV) lie on the Extracellular side of the membrane.

This sequence belongs to the NodC/HAS family. Mg(2+) serves as cofactor. Expression moves as a gradient through the embryo. The mRNA is first expressed in the animal region of the blastula, and by early gastrula is found everywhere except in the outer layer of the dorsal blastopore lip. By mid-gastrula, protein is present in the inner ectodermal layer and the endoderm, then disappears from dorsal ectoderm as the neural plate is induced and later decays in a dorsoventral direction. Last expressed in ventral regions of the gut at the tailbud stage (at protein level).

The protein resides in the membrane. The enzyme catalyses [hyaluronan](n) + UDP-N-acetyl-alpha-D-glucosamine = N-acetyl-beta-D-glucosaminyl-(1-&gt;4)-[hyaluronan](n) + UDP + H(+). It carries out the reaction N-acetyl-beta-D-glucosaminyl-(1-&gt;4)-[hyaluronan](n) + UDP-alpha-D-glucuronate = [hyaluronan](n+1) + UDP + H(+). Its pathway is glycan biosynthesis; hyaluronan biosynthesis. In terms of biological role, catalyzes the addition of GlcNAc or GlcUA monosaccharides to the nascent hyaluronan polymer. Therefore, it is essential to hyaluronan synthesis a major component of most extracellular matrices that has a structural role in tissues architectures and regulates cell adhesion, migration and differentiation. Also able to catalyze the synthesis of chito-oligosaccharide depending on the substrate. The chain is Hyaluronan synthase 1 (has1) from Xenopus laevis (African clawed frog).